The following is a 429-amino-acid chain: Glutamate-1-semialdehyde 2,1-aminomutase (429 aa).

Residue lysine 270 is modified to N6-(pyridoxal phosphate)lysine.

Belongs to the class-III pyridoxal-phosphate-dependent aminotransferase family. HemL subfamily. As to quaternary structure, homodimer. Pyridoxal 5'-phosphate serves as cofactor.

Its subcellular location is the cytoplasm. The enzyme catalyses (S)-4-amino-5-oxopentanoate = 5-aminolevulinate. It participates in porphyrin-containing compound metabolism; protoporphyrin-IX biosynthesis; 5-aminolevulinate from L-glutamyl-tRNA(Glu): step 2/2. The chain is Glutamate-1-semialdehyde 2,1-aminomutase from Cupriavidus pinatubonensis (strain JMP 134 / LMG 1197) (Cupriavidus necator (strain JMP 134)).